We begin with the raw amino-acid sequence, 65 residues long: Large ribosomal subunit protein bL35 (65 aa).

Residues 1 to 28 are disordered; that stretch reads MPKLKTRKAAARRFKATGSGKIKRRKAF.

It belongs to the bacterial ribosomal protein bL35 family.

This Trichodesmium erythraeum (strain IMS101) protein is Large ribosomal subunit protein bL35.